A 240-amino-acid chain; its full sequence is Peptidyl-tRNA hydrolase 2 (240 aa).

Position 60 (tyrosine 60) interacts with tRNA. Catalysis depends on histidine 65, which acts as the Proton acceptor. The tRNA site is built by tyrosine 111, asparagine 113, and asparagine 159.

The protein belongs to the PTH family. Monomer.

Its subcellular location is the cytoplasm. The catalysed reaction is an N-acyl-L-alpha-aminoacyl-tRNA + H2O = an N-acyl-L-amino acid + a tRNA + H(+). Functionally, hydrolyzes ribosome-free peptidyl-tRNAs (with 1 or more amino acids incorporated), which drop off the ribosome during protein synthesis, or as a result of ribosome stalling. Its function is as follows. Catalyzes the release of premature peptidyl moieties from peptidyl-tRNA molecules trapped in stalled 50S ribosomal subunits, and thus maintains levels of free tRNAs and 50S ribosomes. The protein is Peptidyl-tRNA hydrolase 2 of Corynebacterium jeikeium (strain K411).